Reading from the N-terminus, the 266-residue chain is Undecaprenyl-diphosphatase (266 aa).

The next 7 membrane-spanning stretches (helical) occupy residues Pro-39–Phe-59, Ser-86–Pro-106, Val-112–Leu-132, Asn-147–Ser-167, Phe-189–Ser-209, Leu-216–Ile-236, and Asn-246–Leu-266.

The protein belongs to the UppP family.

The protein localises to the cell inner membrane. The catalysed reaction is di-trans,octa-cis-undecaprenyl diphosphate + H2O = di-trans,octa-cis-undecaprenyl phosphate + phosphate + H(+). In terms of biological role, catalyzes the dephosphorylation of undecaprenyl diphosphate (UPP). Confers resistance to bacitracin. The chain is Undecaprenyl-diphosphatase from Prochlorococcus marinus (strain MIT 9301).